We begin with the raw amino-acid sequence, 248 residues long: Undecaprenyl-diphosphatase (248 aa).

8 helical membrane passes run 4–24 (IVLG…SGHL), 40–60 (FAFL…KEIV), 74–94 (YSLV…GFLF), 101–121 (SFSN…SLFV), 134–154 (ISYI…FPGI), 174–194 (ALKY…ILET), 201–221 (SYIL…LLIL), and 228–248 (KKLK…FFVG).

It belongs to the UppP family.

It localises to the cell inner membrane. The catalysed reaction is di-trans,octa-cis-undecaprenyl diphosphate + H2O = di-trans,octa-cis-undecaprenyl phosphate + phosphate + H(+). Functionally, catalyzes the dephosphorylation of undecaprenyl diphosphate (UPP). Confers resistance to bacitracin. The sequence is that of Undecaprenyl-diphosphatase from Thermosipho africanus (strain TCF52B).